We begin with the raw amino-acid sequence, 2290 residues long: Protein Ycf2 (2290 aa).

Residue 1638–1645 coordinates ATP; that stretch reads GSIGTGRS.

This sequence belongs to the Ycf2 family.

It is found in the plastid. The protein localises to the chloroplast stroma. In terms of biological role, probable ATPase of unknown function. Its presence in a non-photosynthetic plant (Epifagus virginiana) and experiments in tobacco indicate that it has an essential function which is probably not related to photosynthesis. The chain is Protein Ycf2 from Phalaenopsis aphrodite subsp. formosana (Moth orchid).